Consider the following 372-residue polypeptide: Envelope phospholipase OPG057 (372 aa).

The YPPL motif lies at 153-156 (YPPL). Residues Cys185 and Cys186 are each lipidated (S-palmitoyl cysteine; by host). Residues 307–334 (FTIQNNTKLLIVDDEYVHITSANFDGTH) enclose the PLD phosphodiesterase domain.

It belongs to the orthopoxvirus OPG057 family. As to quaternary structure, interacts with protein OPG190. Palmitoylated. Attachment of the palmitate moiety is essential for correct intracellular targeting and protein function.

The protein localises to the virion membrane. The protein resides in the host Golgi apparatus. Its subcellular location is the host trans-Golgi network. It is found in the host endoplasmic reticulum membrane. The enzyme catalyses a 1,2-diacyl-sn-glycero-3-phosphocholine + H2O = a 1,2-diacyl-sn-glycero-3-phosphate + choline + H(+). Functionally, major envelope protein that plays a role in the biogenesis of the viral double membrane and in egress of virus from the host cell. Produces the wrapped form of virus that is required for cell-to-cell spread. Acts as a lipase with broad specificity including phospholipase C, phospholipase A, and triacylglycerol lipase activities. The polypeptide is Envelope phospholipase OPG057 (OPG057) (Vaccinia virus (strain Copenhagen) (VACV)).